Here is a 571-residue protein sequence, read N- to C-terminus: uncharacterized protein (571 aa).

11 consecutive transmembrane segments (helical) span residues 5-27 (VILN…GYLV), 34-56 (TFVL…LNIT), 61-79 (IGSL…QGGA), 92-114 (LLAS…AWIF), 161-183 (TVGY…ATIF), 391-408 (FIFF…GLIS), 412-434 (FGIS…FGWI), 455-474 (LGLA…QAIT), 484-506 (FFLG…YYLL), 513-532 (VLLA…AALL), and 547-569 (SYAL…VTII).

Belongs to the AAE transporter (TC 2.A.81) family.

Its subcellular location is the cell membrane. This is an uncharacterized protein from Francisella tularensis subsp. tularensis (strain SCHU S4 / Schu 4).